We begin with the raw amino-acid sequence, 810 residues long: Volume-regulated anion channel subunit LRRC8A (810 aa).

Methionine 1 carries the N-acetylmethionine modification. Over 1-22 the chain is Cytoplasmic; it reads MIPVTELRYFADTQPAYRILKP. Residues 23 to 47 form a helical membrane-spanning segment; that stretch reads WWDVFTDYISIVMLMIAVFGGTLQV. The Extracellular segment spans residues 48–123; it reads TQDKMICLPC…YENRLHWFAK (76 aa). 3 disulfide bridges follow: cysteine 54-cysteine 310, cysteine 57-cysteine 65, and cysteine 113-cysteine 295. 2 N-linked (GlcNAc...) asparagine glycosylation sites follow: asparagine 66 and asparagine 83. Residues 124-142 traverse the membrane as a helical segment; the sequence is YFPYLVLLHTLIFLACSNF. Topologically, residues 143-264 are cytoplasmic; sequence WFKFPRTSSK…EEGDIVYRLY (122 aa). The residue at position 200 (threonine 200) is a Phosphothreonine. Phosphoserine is present on serine 202. Phosphothreonine is present on threonine 215. Residue serine 217 is modified to Phosphoserine. The chain crosses the membrane as a helical span at residues 265-286; that stretch reads MRQTIIKVIKFALIICYTVYYV. Over 287–316 the chain is Extracellular; it reads HNIKFDVDCTVDIESLTGYRTYRCAHPLAT. The chain crosses the membrane as a helical span at residues 317-341; that stretch reads LFKILASFYISLVIFYGLICMYTLW. Residues 342–810 lie on the Cytoplasmic side of the membrane; that stretch reads WMLRRSLKKY…RLWRADKEQA (469 aa). 17 LRR repeats span residues 411–422, 423–445, 447–468, 469–492, 493–515, 518–542, 543–565, 567–589, 590–613, 614–637, 639–661, 662–684, 686–707, 708–730, 732–753, 754–776, and 778–801; these read WTLDKLRQRLTK, NAQD…VFDL, ELEV…IAQL, TGLK…AFLR, ENLR…IYSL, LEEL…GLRE, LKRL…VTDV, VHLQ…SLKK, MVNL…IFSL, HNLQ…SFQH, HRLT…IGNL, TNLE…LFYC, KLRY…IGLL, QNLQ…LFQC, KLRA…VGEL, TNLT…LGEC, and LLKR…VKER. A Di-leucine motif motif is present at residues 706–707; the sequence is LL.

It belongs to the LRRC8 family. In terms of assembly, heterohexamer; oligomerizes with other LRRC8 proteins (LRRC8B, LRRC8C, LRRC8D and/or LRRC8E) to form a heterohexamer. Can form homohexamers in vitro, but these have lower conductance than heterohexamers. In vivo, the subunit composition may depend primarily on expression levels, and heterooligomeric channels containing various proportions of the different LRRC8 proteins may coexist. Interact with GRB2. Interacts with NOX4; this interaction prevents the ubiquitin-mediated degradation of LRRC8A. In terms of processing, N-glycosylated. In terms of tissue distribution, ubiquitously expressed. High levels detected in the bone marrow; lower levels found in peripheral blood cells. Highly expressed in pancreatic beta cells.

It localises to the cell membrane. It is found in the lysosome membrane. The catalysed reaction is chloride(in) = chloride(out). It catalyses the reaction iodide(out) = iodide(in). The enzyme catalyses taurine(out) = taurine(in). It carries out the reaction L-aspartate(out) = L-aspartate(in). The catalysed reaction is L-glutamate(out) = L-glutamate(in). It catalyses the reaction myo-inositol(out) = myo-inositol(in). The enzyme catalyses 2',3'-cGAMP(out) = 2',3'-cGAMP(in). With respect to regulation, inhibited by (4-[(2-butyl-6,7-dichloro-2-cyclopentyl-2,3-dihydro-1-oxo-1H-inden-5-yl)oxy]butanoic acid), which plugs the channel like a cork in a bottle by binding in the extracellular selectivity filter and sterically occluding ion conduction. Lipids may block conduction in closed heterohexameric channels. In terms of biological role, essential component of the volume-regulated anion channel (VRAC, also named VSOAC channel), an anion channel required to maintain a constant cell volume in response to extracellular or intracellular osmotic changes. The VRAC channel conducts iodide better than chloride and can also conduct organic osmolytes like taurine. Mediates efflux of amino acids, such as aspartate and glutamate, in response to osmotic stress. In complex with LRRC8C or LRRC8E, acts as a transporter of immunoreactive cyclic dinucleotide GMP-AMP (2'-3'-cGAMP), an immune messenger produced in response to DNA virus in the cytosol: mediates both import and export of 2'-3'-cGAMP, thereby promoting transfer of 2'-3'-cGAMP to bystander cells. In contrast, complexes containing LRRC8D inhibit transport of 2'-3'-cGAMP. Required for in vivo channel activity, together with at least one other family member (LRRC8B, LRRC8C, LRRC8D or LRRC8E); channel characteristics depend on the precise subunit composition. Can form functional channels by itself (in vitro). Involved in B-cell development: required for the pro-B cell to pre-B cell transition. Also required for T-cell development. Required for myoblast differentiation: VRAC activity promotes membrane hyperpolarization and regulates insulin-stimulated glucose metabolism and oxygen consumption. Also acts as a regulator of glucose-sensing in pancreatic beta cells: VRAC currents, generated in response to hypotonicity- or glucose-induced beta cell swelling, depolarize cells, thereby causing electrical excitation, leading to increase glucose sensitivity and insulin secretion. Also plays a role in lysosome homeostasis by forming functional lysosomal VRAC channels in response to low cytoplasmic ionic strength condition: lysosomal VRAC channels are necessary for the formation of large lysosome-derived vacuoles, which store and then expel excess water to maintain cytosolic water homeostasis. Acts as a key factor in NLRP3 inflammasome activation by modulating itaconate efflux and mitochondria function. The polypeptide is Volume-regulated anion channel subunit LRRC8A (Mus musculus (Mouse)).